The sequence spans 536 residues: Trigger factor (536 aa).

Positions 164 to 249 (GDQVIIDFAG…VKEVKVPAAT (86 aa)) constitute a PPIase FKBP-type domain. Residues 439-536 (IEADDDSGHV…APAKKAAAKK (98 aa)) are disordered. Over residues 472–502 (TKKEAVKDEAKAEEAPAKKAPAKKAEPKAEA) the composition is skewed to basic and acidic residues. A compositionally biased stretch (low complexity) spans 503–515 (KPAAAKKAAPAKA). Residues 516–525 (AAEEKAEPAK) show a composition bias toward basic and acidic residues. Over residues 527 to 536 (APAKKAAAKK) the composition is skewed to basic residues.

It belongs to the FKBP-type PPIase family. Tig subfamily.

It localises to the cytoplasm. It carries out the reaction [protein]-peptidylproline (omega=180) = [protein]-peptidylproline (omega=0). Its function is as follows. Involved in protein export. Acts as a chaperone by maintaining the newly synthesized protein in an open conformation. Functions as a peptidyl-prolyl cis-trans isomerase. The chain is Trigger factor from Sphingopyxis alaskensis (strain DSM 13593 / LMG 18877 / RB2256) (Sphingomonas alaskensis).